The following is a 79-amino-acid chain: Beta-defensin 15 (79 aa).

A signal peptide spans 1–20 (MKTFLFLFAVFFFLDPAKNA). Disulfide bonds link C26–C53, C33–C47, and C37–C54.

This sequence belongs to the beta-defensin family.

The protein localises to the secreted. In terms of biological role, has antibacterial activity. The polypeptide is Beta-defensin 15 (Defb15) (Rattus norvegicus (Rat)).